The primary structure comprises 238 residues: IkB-like protein (238 aa).

ANK repeat units lie at residues 48-77 (GSSV…PGEI), 86-115 (DGNS…KNGT), 123-152 (NGMT…DPTQ), and 157-187 (RGFT…PLYM). A Nuclear localization signal motif is present at residues 80 to 86 (PHRRDKD). The Nuclear localization signal signature appears at 202–213 (KKKPKIIITGCK). Residues 205–212 (PKIIITGC) carry the PxIxITxC motif; Interaction with host PPP3CA motif. The short motif at 227–230 (FLCV) is the FLCV motif element.

This sequence belongs to the asfivirus A238L family. Interacts with host PPIA. Interacts with host PPP3CA/Calcineurin. Interacts with host RELA/p65; interaction of the 32 kDa form with host RELA results in the formation of a stable complex with NF-kappa-B. Interacts with host PPP3R1. Interacts with host EP300; this interaction inhibits the association of host EP300 with host RELA, JUN and NFATC2. The protein exists in a 28 kDa and a 32 kDa form, probably due to post-translational modifications which are neither phosphorylation, nor sumoylation.

The protein resides in the host nucleus. It localises to the host cytoplasm. In terms of biological role, I-kappa-B- (IkB)-like protein that inhibits the binding of NF-kappa-B to DNA, thereby down-regulating pro-inflammatory cytokine production. Forms a heterodimer with the NF-kappa-B subunit RELA/p65 and prevents the activation of the NF-kappa-B transcription factor. Also inhibits the host calcineurin phosphatase activity, which is required for the induction of nuclear factor of activated T cells(NFAT)-dependent immune response genes. Inhibits calcineurin function, which is required for the induction of nuclear factor of activated T cells (NFAT)-dependent immune response genes. Prevents the binding of substrates to calcineurin without affecting the phosphatase activity. Does not contain the serine residues that are phosphorylated by host IkB kinase and thus is not degraded following stimulation of the NFkB pathway. In African swine fever virus (strain Badajoz 1971 Vero-adapted) (Ba71V), this protein is IkB-like protein (A238L).